A 388-amino-acid polypeptide reads, in one-letter code: Mannitol-1-phosphate 5-dehydrogenase (388 aa).

NAD(+) is bound at residue 4 to 15; it reads AVHFGAGNIGRG.

Belongs to the mannitol dehydrogenase family.

It catalyses the reaction D-mannitol 1-phosphate + NAD(+) = beta-D-fructose 6-phosphate + NADH + H(+). This Lactococcus lactis subsp. cremoris (strain MG1363) protein is Mannitol-1-phosphate 5-dehydrogenase.